Here is a 359-residue protein sequence, read N- to C-terminus: Histidinol-phosphate aminotransferase (359 aa).

At Lys-212 the chain carries N6-(pyridoxal phosphate)lysine.

It belongs to the class-II pyridoxal-phosphate-dependent aminotransferase family. Histidinol-phosphate aminotransferase subfamily. In terms of assembly, homodimer. It depends on pyridoxal 5'-phosphate as a cofactor.

It carries out the reaction L-histidinol phosphate + 2-oxoglutarate = 3-(imidazol-4-yl)-2-oxopropyl phosphate + L-glutamate. It participates in amino-acid biosynthesis; L-histidine biosynthesis; L-histidine from 5-phospho-alpha-D-ribose 1-diphosphate: step 7/9. The chain is Histidinol-phosphate aminotransferase from Buchnera aphidicola subsp. Schlechtendalia chinensis.